The chain runs to 141 residues: Large ribosomal subunit protein uL11 (141 aa).

The protein belongs to the universal ribosomal protein uL11 family. As to quaternary structure, part of the ribosomal stalk of the 50S ribosomal subunit. Interacts with L10 and the large rRNA to form the base of the stalk. L10 forms an elongated spine to which L12 dimers bind in a sequential fashion forming a multimeric L10(L12)X complex. In terms of processing, one or more lysine residues are methylated.

In terms of biological role, forms part of the ribosomal stalk which helps the ribosome interact with GTP-bound translation factors. The protein is Large ribosomal subunit protein uL11 of Prochlorococcus marinus subsp. pastoris (strain CCMP1986 / NIES-2087 / MED4).